Consider the following 185-residue polypeptide: Crossover junction endodeoxyribonuclease RuvC (185 aa).

Catalysis depends on residues Asp-7, Glu-66, and Asp-137. Residues Asp-7, Glu-66, and Asp-137 each contribute to the Mg(2+) site.

Belongs to the RuvC family. As to quaternary structure, homodimer which binds Holliday junction (HJ) DNA. The HJ becomes 2-fold symmetrical on binding to RuvC with unstacked arms; it has a different conformation from HJ DNA in complex with RuvA. In the full resolvosome a probable DNA-RuvA(4)-RuvB(12)-RuvC(2) complex forms which resolves the HJ. Requires Mg(2+) as cofactor.

It localises to the cytoplasm. The enzyme catalyses Endonucleolytic cleavage at a junction such as a reciprocal single-stranded crossover between two homologous DNA duplexes (Holliday junction).. Its function is as follows. The RuvA-RuvB-RuvC complex processes Holliday junction (HJ) DNA during genetic recombination and DNA repair. Endonuclease that resolves HJ intermediates. Cleaves cruciform DNA by making single-stranded nicks across the HJ at symmetrical positions within the homologous arms, yielding a 5'-phosphate and a 3'-hydroxyl group; requires a central core of homology in the junction. The consensus cleavage sequence is 5'-(A/T)TT(C/G)-3'. Cleavage occurs on the 3'-side of the TT dinucleotide at the point of strand exchange. HJ branch migration catalyzed by RuvA-RuvB allows RuvC to scan DNA until it finds its consensus sequence, where it cleaves and resolves the cruciform DNA. In Anaeromyxobacter dehalogenans (strain 2CP-1 / ATCC BAA-258), this protein is Crossover junction endodeoxyribonuclease RuvC.